Consider the following 351-residue polypeptide: Putative ABC transporter permease protein MJ0876 (351 aa).

The next 9 membrane-spanning stretches (helical) occupy residues 4-24, 59-79, 99-119, 124-144, 152-172, 196-216, 249-269, 284-304, and 322-342; these read VGIL…ALYL, LPPI…GLML, VLMV…FEIF, ILVA…IIAL, VIIV…YLIA, GDVI…MFLI, FITG…IIAP, LVPA…ILSL, and PLPI…YLVY.

This sequence belongs to the binding-protein-dependent transport system permease family. FecCD subfamily.

It is found in the cell membrane. Probably part of a binding-protein-dependent transport system. Probably responsible for the translocation of the substrate across the membrane. The chain is Putative ABC transporter permease protein MJ0876 from Methanocaldococcus jannaschii (strain ATCC 43067 / DSM 2661 / JAL-1 / JCM 10045 / NBRC 100440) (Methanococcus jannaschii).